Consider the following 484-residue polypeptide: tRNA sulfurtransferase (484 aa).

The 106-residue stretch at 61–166 (PHLIELLQCI…DKLLFIQARH (106 aa)) folds into the THUMP domain. Residues 183–184 (LI), lysine 265, glycine 287, and glutamine 296 each bind ATP. Cysteines 344 and 456 form a disulfide. The Rhodanese domain maps to 404–483 (LGENDVILDI…FNNVQVFVKA (80 aa)). The active-site Cysteine persulfide intermediate is the cysteine 456.

It belongs to the ThiI family.

It is found in the cytoplasm. It catalyses the reaction [ThiI sulfur-carrier protein]-S-sulfanyl-L-cysteine + a uridine in tRNA + 2 reduced [2Fe-2S]-[ferredoxin] + ATP + H(+) = [ThiI sulfur-carrier protein]-L-cysteine + a 4-thiouridine in tRNA + 2 oxidized [2Fe-2S]-[ferredoxin] + AMP + diphosphate. The catalysed reaction is [ThiS sulfur-carrier protein]-C-terminal Gly-Gly-AMP + S-sulfanyl-L-cysteinyl-[cysteine desulfurase] + AH2 = [ThiS sulfur-carrier protein]-C-terminal-Gly-aminoethanethioate + L-cysteinyl-[cysteine desulfurase] + A + AMP + 2 H(+). Its pathway is cofactor biosynthesis; thiamine diphosphate biosynthesis. Functionally, catalyzes the ATP-dependent transfer of a sulfur to tRNA to produce 4-thiouridine in position 8 of tRNAs, which functions as a near-UV photosensor. Also catalyzes the transfer of sulfur to the sulfur carrier protein ThiS, forming ThiS-thiocarboxylate. This is a step in the synthesis of thiazole, in the thiamine biosynthesis pathway. The sulfur is donated as persulfide by IscS. This chain is tRNA sulfurtransferase, found in Actinobacillus succinogenes (strain ATCC 55618 / DSM 22257 / CCUG 43843 / 130Z).